The chain runs to 207 residues: Guanylate kinase (207 aa).

One can recognise a Guanylate kinase-like domain in the interval 6 to 185; sequence GLLIVLSGPS…AKQRIQSIVE (180 aa). Residue 13–20 coordinates ATP; it reads GPSGVGKG.

Belongs to the guanylate kinase family.

It localises to the cytoplasm. It catalyses the reaction GMP + ATP = GDP + ADP. Functionally, essential for recycling GMP and indirectly, cGMP. The sequence is that of Guanylate kinase from Staphylococcus saprophyticus subsp. saprophyticus (strain ATCC 15305 / DSM 20229 / NCIMB 8711 / NCTC 7292 / S-41).